The sequence spans 71 residues: Ceratotoxin-D (71 aa).

A signal peptide spans 1–23 (MANLKAVFLICILAFIAFHCVVG). The propeptide occupies 24 to 35 (APTAEDSIVVKR).

As to quaternary structure, homomer of four to six subunits.

The protein resides in the secreted. Female-specific peptides with potent activity against Gram-positive and Gram-negative bacteria. They have as well hemolytic activity. The polypeptide is Ceratotoxin-D (CTXD) (Ceratitis capitata (Mediterranean fruit fly)).